The following is a 422-amino-acid chain: Histone deacetylase B (422 aa).

Residue D102 participates in substrate binding. Catalysis depends on H144, which acts as the Proton acceptor. G152 lines the substrate pocket. 3 residues coordinate a divalent metal cation: D179, H181, and D268. Substrate is bound at residue Y307. The disordered stretch occupies residues 399–422 (IDFDRDEDSKENMDKRKKKHNDFS). A compositionally biased stretch (basic residues) spans 413 to 422 (KRKKKHNDFS).

This sequence belongs to the histone deacetylase family. HD type 1 subfamily.

The protein localises to the nucleus. It localises to the cytoplasm. It carries out the reaction N(6)-acetyl-L-lysyl-[histone] + H2O = L-lysyl-[histone] + acetate. With respect to regulation, its activity is inhibited by trichostatin A (TSA), a well known histone deacetylase inhibitor. Cytosolic activity is refractory to inhibition by TSA, while the nuclear activity is inhibited completely. Functionally, responsible for the deacetylation of lysine residues on the N-terminal part of the core histones (H2A, H2B, H3 and H4). Histone deacetylation plays an important role in transcriptional regulation, cell cycle progression and developmental events. Histone deacetylases act via the formation of large multiprotein complexes. May play a role in the regulation of the timing of gene expression during the development and in the definition aspects of the phenotype that mediate social behavior in genetically heterogeneous groups. In Dictyostelium discoideum (Social amoeba), this protein is Histone deacetylase B (hdaB).